The sequence spans 158 residues: NAD(P)H-quinone oxidoreductase subunit J, chloroplastic (158 aa).

It belongs to the complex I 30 kDa subunit family. As to quaternary structure, NDH is composed of at least 16 different subunits, 5 of which are encoded in the nucleus.

It is found in the plastid. The protein resides in the chloroplast thylakoid membrane. It carries out the reaction a plastoquinone + NADH + (n+1) H(+)(in) = a plastoquinol + NAD(+) + n H(+)(out). The enzyme catalyses a plastoquinone + NADPH + (n+1) H(+)(in) = a plastoquinol + NADP(+) + n H(+)(out). Functionally, NDH shuttles electrons from NAD(P)H:plastoquinone, via FMN and iron-sulfur (Fe-S) centers, to quinones in the photosynthetic chain and possibly in a chloroplast respiratory chain. The immediate electron acceptor for the enzyme in this species is believed to be plastoquinone. Couples the redox reaction to proton translocation, and thus conserves the redox energy in a proton gradient. This chain is NAD(P)H-quinone oxidoreductase subunit J, chloroplastic, found in Solanum lycopersicum (Tomato).